We begin with the raw amino-acid sequence, 271 residues long: Putative phosphoenolpyruvate synthase regulatory protein (271 aa).

152–159 lines the ADP pocket; sequence GVSRCGKT.

Belongs to the pyruvate, phosphate/water dikinase regulatory protein family. PSRP subfamily.

It catalyses the reaction [pyruvate, water dikinase] + ADP = [pyruvate, water dikinase]-phosphate + AMP + H(+). The enzyme catalyses [pyruvate, water dikinase]-phosphate + phosphate + H(+) = [pyruvate, water dikinase] + diphosphate. Bifunctional serine/threonine kinase and phosphorylase involved in the regulation of the phosphoenolpyruvate synthase (PEPS) by catalyzing its phosphorylation/dephosphorylation. This Legionella pneumophila (strain Paris) protein is Putative phosphoenolpyruvate synthase regulatory protein.